Consider the following 649-residue polypeptide: Exoribonuclease 2 (649 aa).

In terms of domain architecture, RNB spans 190 to 517; the sequence is RKDLTDLDFI…NHRLLKSIIK (328 aa). In terms of domain architecture, S1 motif spans 562 to 644; sequence NQKFNAEITD…KTRSIIAKPV (83 aa).

It belongs to the RNR ribonuclease family. RNase II subfamily.

The protein resides in the cytoplasm. It catalyses the reaction Exonucleolytic cleavage in the 3'- to 5'-direction to yield nucleoside 5'-phosphates.. In terms of biological role, involved in mRNA degradation. Hydrolyzes single-stranded polyribonucleotides processively in the 3' to 5' direction. The polypeptide is Exoribonuclease 2 (Buchnera aphidicola subsp. Acyrthosiphon pisum (strain 5A)).